The sequence spans 134 residues: Profilin-4 (134 aa).

The cysteines at positions 13 and 118 are disulfide-linked. An Involved in PIP2 interaction motif is present at residues 84–100 (AVIRGKKGSGGITIKKT). Thr114 carries the post-translational modification Phosphothreonine.

Belongs to the profilin family. As to quaternary structure, occurs in many kinds of cells as a complex with monomeric actin in a 1:1 ratio. Phosphorylated by MAP kinases.

The protein localises to the cytoplasm. The protein resides in the cytoskeleton. In terms of biological role, binds to actin and affects the structure of the cytoskeleton. At high concentrations, profilin prevents the polymerization of actin, whereas it enhances it at low concentrations. This is Profilin-4 from Olea europaea (Common olive).